The primary structure comprises 211 residues: Urease accessory protein UreG (211 aa).

GTP is bound at residue 13-20 (GPVGSGKT).

The protein belongs to the SIMIBI class G3E GTPase family. UreG subfamily. In terms of assembly, homodimer. UreD, UreF and UreG form a complex that acts as a GTP-hydrolysis-dependent molecular chaperone, activating the urease apoprotein by helping to assemble the nickel containing metallocenter of UreC. The UreE protein probably delivers the nickel.

It localises to the cytoplasm. Its function is as follows. Facilitates the functional incorporation of the urease nickel metallocenter. This process requires GTP hydrolysis, probably effectuated by UreG. This is Urease accessory protein UreG from Alkalilimnicola ehrlichii (strain ATCC BAA-1101 / DSM 17681 / MLHE-1).